Here is a 106-residue protein sequence, read N- to C-terminus: Thiosulfate sulfurtransferase GlpE (106 aa).

In terms of domain architecture, Rhodanese spans 16–104; it reads REQGAVLVDV…WRTTYPQETV (89 aa). Residue C64 is the Cysteine persulfide intermediate of the active site.

It belongs to the GlpE family.

It localises to the cytoplasm. It carries out the reaction thiosulfate + hydrogen cyanide = thiocyanate + sulfite + 2 H(+). It catalyses the reaction thiosulfate + [thioredoxin]-dithiol = [thioredoxin]-disulfide + hydrogen sulfide + sulfite + 2 H(+). Transferase that catalyzes the transfer of sulfur from thiosulfate to thiophilic acceptors such as cyanide or dithiols. May function in a CysM-independent thiosulfate assimilation pathway by catalyzing the conversion of thiosulfate to sulfite, which can then be used for L-cysteine biosynthesis. This is Thiosulfate sulfurtransferase GlpE from Pseudomonas syringae pv. syringae (strain B728a).